Reading from the N-terminus, the 431-residue chain is GTPase Obg (431 aa).

One can recognise an Obg domain in the interval methionine 1–leucine 158. The OBG-type G domain maps to alanine 159 to aspartate 335. GTP is bound by residues glycine 165–serine 172, phenylalanine 190–valine 194, aspartate 212–glycine 215, threonine 282–aspartate 285, and serine 316–isoleucine 318. 2 residues coordinate Mg(2+): serine 172 and threonine 192. Positions tyrosine 353–aspartate 431 constitute an OCT domain.

The protein belongs to the TRAFAC class OBG-HflX-like GTPase superfamily. OBG GTPase family. Monomer. The cofactor is Mg(2+).

Its subcellular location is the cytoplasm. Its function is as follows. An essential GTPase which binds GTP, GDP and possibly (p)ppGpp with moderate affinity, with high nucleotide exchange rates and a fairly low GTP hydrolysis rate. Plays a role in control of the cell cycle, stress response, ribosome biogenesis and in those bacteria that undergo differentiation, in morphogenesis control. This chain is GTPase Obg, found in Lactiplantibacillus plantarum (strain ATCC BAA-793 / NCIMB 8826 / WCFS1) (Lactobacillus plantarum).